A 3011-amino-acid polypeptide reads, in one-letter code: MSTNPKPQRKTKRNTNRRPQDVKFPGGGQIVGGVYLLPRRGPRVGVRATRKTSERSQPRGRRQPIPKARRPEGRSWAQPGYPWPLYGNEGCGWAGWLLSPRGSRPSWGPSDPRRRSRNLGKVIDTLTCGFADLMGYIPLVGAPLGGAARALAHGVRVLEDGVNYATGNLPGCSFSIFLLALLSCLTVPASAVGVRNSSGVYHVTNDCPNASVVYETENLIMHLPGCVPYVREGNASRCWVSLSPTVAARDSRVPVSEVRRRVDSIVGAAAFCSAMYVGDLCGSIFLVGQIFTFSPRHHWTTQDCNCSIYPGHVTGHRMAWDMMMNWSPTGALVVAQLLRIPQAIVDMIAGAHWGVLAGLAYYSMVGNWAKVVVVLLLFAGVDAETRVTGGAAGHTAFGFASFLAPGAKQKIQLINTNGSWHINRTALNCNESLDTGWLAGLLYYHKFNSSGCPERMASCQPLTAFDQGWGPITHEGNASDDQRPYCWHYALRPCGIVPAKKVCGPVYCFTPSPVVVGTTDRAGVPTYRWGANETDVLLLNNSRPPMGNWFGCTWMNSSGFTKTCGAPACNIGGSGNNTLLCPTDCFRKHPDATYSRCGSGPWLTPRCLVDYPYRLWHYPCTVNYTIFKIRMFVGGVEHRLDAACNWTRGERCDLDDRDRAELSPLLLSTTQWQVLPCSFTTLPALSTGLIHLHQNIVDVQYLYGLSSAVTSWVIKWEYVVLLFLLLADARICACLWMMLLISQVEAALENLIVLNAASLVGTHGIVPFFIFFCAAWYLKGKWAPGLAYSVYGMWPLLLLLLALPQRAYALDQELAASCGATVFICLAVLTLSPYYKQYMARGIWWLQYMLTRAEALLQVWVPPLNARGGRDGVVLLTCVLHPHLLFEITKIMLAILGPLWILQASLLKVPYFVRAHGLIRLCMLVRKTAGGQYVQMALLKLGAFAGTYIYNHLSPLQDWAHSGLRDLAVATEPVIFSRMEIKTITWGADTAACGDIINGLPVSARRGREVLLGPADALTDKGWRLLAPITAYAQQTRGLLGCIITSLTGRDKNQVEGEVQIVSTATQTFLATCVNGVCWTVYHGAGSRTIASASGPVIQMYTNVDQDLVGWPAPQGARSLTPCTCGASDLYLVTRHADVIPVRRRGDNRGSLLSPRPISYLKGSSGGPLLCPMGHAVGIFRAAVCTRGVAKAVDFVPVESLETTMRSPVFTDNSSPPTVPQSYQVAHLHAPTGSGKSTKVPAAYAAQGYKVLVLNPSVAATLGFGAYMSKAHGIDPNVRTGVRTITTGSPITHSTYGKFLADGGCSGGAYDIIICDECHSVDATSILGIGTVLDQAETAGVRLTILATATPPGSVTVPHSNIEEVALSTEGEIPFYGKAIPLNYIKGGRHLIFCHSKKKCDELAAKLVGLGVNAVAFYRGLDVSVIPTTGDVVVVATDALMTGYTGDFDSVIDCNTCVVQTVDFSLDPTFSIETSTVPQDAVSRSQRRGRTGRGKHGIYRYVSPGERPSGMFDSVVLCECYDAGCAWYELTPAETTVRLRAYLNTPGLPVCQDHLEFWESVFTGLTHIDAHFLSQTKQSGENFPYLVAYQATVCARAKAPPPSWDQMWKCLIRLKPTLTGATPLLYRLGGVQNEITLTHPITKYIMACMSADLEVVTSTWVLVGGVLAALAAYCLSTGSVVIVGRIILSGKPAVIPDREVLYREFDEMEECAAHIPYLEQGMHLAEQFKQKALGLLQTASKQAETITPAVHTNWQKLESFWAKHMWNFVSGIQYLAGLSTLPGNPAIASLMSFTAAVTSPLTTQQTLLFNILGGWVAAQLAAPAAATAFVGAGITGAVIGSVGLGKVLVDILAGYGAGVAGALVAFKIMSGEAPTAEDLVNLLPAILSPGALVVGVVCAAILRRHVGPGEGAVQWMNRLIAFASRGNHVSPTHYVPESDASVRVTHILTSLTVTQLLKRLHVWISSDCTAPCAGSWLKDVWDWICEVLSDFKSWLKAKLMPQLPGIPFVSCQRGYRGVWRGEGIMHARCPCGADITGHVKNGSMRIVGPKTCSNTWRGSFPINAHTTGPCTPSPAPNYTFALWRVSAEEYVEVRRLGDFHYITGVTTDKIKCPCQVPSPEFFTEVDGVRLHRYAPPCKPLLRDEVTFSIGLNEYLVGSQLPCEPEPDVAVLTSMLTDPSHITAETAARRLNRGSPPSLASSSASQLSAPSLKATCTTHHDSPDADLITANLLWRQEMGGNITRVESENKIVILDSFDPLVAEEDDREISVPAEILLKSKKFPPAMPIWARPDYNPPLVEPWKRPDYEPPLVHGCPLPPPKPTPVPPPRRKRTVVLDESTVSSALAELATKTFGSSTTSGVTSGEAAESSPAPSCDGELDSEAESYSSMPPLEGEPGDPDLSDGSWSTVSSDGGTEDVVCCSMSYSWTGALITPCAAEETKLPINALSNSLLRHHNLVYSTTSRSAGQRQKKVTFDRLQVLDDHYRDVLKEAKAKASTVKAKLLSVEEACSLTPPHSARSKFGYGAKDVRSHSSKAIRHINSVWQDLLEDNTTPIDTTIMAKNEVFCVKPEKGGRKPARLIVYPDLGVRVCEKRALYDVVKQLPIAVMGTSYGFQYSPAQRVDFLLNAWKSKKNPMGFSYDTRCFDSTVTEADIRTEEDLYQSCDLVPEARAAIRSLTERLYIGGPLTNSKGQNCGYRRCRASGVLTTSCGNTITCYLKASAACRAAKLRDCTMLVCGDDLVVICESAGVQEDAANLRAFTEAMTRYSAPPGDPPQPEYDLELITSCSSNVSVAHDGAGKRVYYLTRDPETPLARAAWETARHTPVNSWLGNIIMFAPTLWVRMVLMTHFFSILIAQEHLEKALDCEIYGAVHSVQPLDLPEIIQRLHGLSAFSLHSYSPGEINRVAACLRKLGVPPLRAWRHRARSVRATLLSQGGRAAICGKYLFNWAVKTKLKLTPLPSASQLDLSNWFTGGYSGGDIYHSVSHVRPRWFFWCLLLLSVGVGIYLLPNR.

Position 2 is an N-acetylserine; by host (Ser2). Residues 2–23 (STNPKPQRKTKRNTNRRPQDVK) form an interaction with STAT1 region. The interaction with EIF2AK2/PKR stretch occupies residues 2 to 58 (STNPKPQRKTKRNTNRRPQDVKFPGGGQIVGGVYLLPRRGPRVGVRATRKTSERSQP). Residues 2-59 (STNPKPQRKTKRNTNRRPQDVKFPGGGQIVGGVYLLPRRGPRVGVRATRKTSERSQPR) are interaction with DDX3X. Residues 2–75 (STNPKPQRKT…PKARRPEGRS (74 aa)) form a disordered region. The Cytoplasmic segment spans residues 2–168 (STNPKPQRKT…EDGVNYATGN (167 aa)). Short sequence motifs (nuclear localization signal) lie at residues 5–13 (PKPQRKTKR) and 38–43 (PRRGPR). Residues 7–16 (PQRKTKRNTN) show a composition bias toward basic residues. Position 53 is a phosphoserine; by host (Ser53). 2 consecutive short sequence motifs (nuclear localization signal) follow at residues 58-64 (PRGRRQP) and 66-71 (PKARRP). The segment covering 58–68 (PRGRRQPIPKA) has biased composition (basic residues). Ser99 carries the phosphoserine; by host modification. Residues 112–152 (PRRRSRNLGKVIDTLTCGFADLMGYIPLVGAPLGGAARALA) form an important for endoplasmic reticulum and mitochondrial localization region. Ser116 bears the Phosphoserine; by host PKA mark. The interaction with APOA2 stretch occupies residues 122–173 (VIDTLTCGFADLMGYIPLVGAPLGGAARALAHGVRVLEDGVNYATGNLPGCS). The tract at residues 164–167 (YATG) is important for lipid droplets localization. A helical transmembrane segment spans residues 169 to 189 (LPGCSFSIFLLALLSCLTVPA). The propeptide at 178–191 (LLALLSCLTVPASA) is ER anchor for the core protein, removed in mature form by host signal peptidase. At 190–358 (SAVGVRNSSG…AGAHWGVLAG (169 aa)) the chain is on the lumenal side. Residues Asn196, Asn209, and Asn234 are each glycosylated (N-linked (GlcNAc...) asparagine; by host). Residues 265-296 (IVGAAAFCSAMYVGDLCGSIFLVGQIFTFSPR) form an important for fusion region. Residue Asn305 is glycosylated (N-linked (GlcNAc...) asparagine; by host). A helical membrane pass occupies residues 359–379 (LAYYSMVGNWAKVVVVLLLFA). The Lumenal segment spans residues 380-725 (GVDAETRVTG…WEYVVLLFLL (346 aa)). Residues 385–411 (TRVTGGAAGHTAFGFASFLAPGAKQKI) are HVR1. N-linked (GlcNAc...) (high mannose) asparagine; by host glycans are attached at residues Asn417, Asn423, Asn430, and Asn448. 4 cysteine pairs are disulfide-bonded: Cys429–Cys552, Cys452–Cys459, Cys486–Cys494, and Cys503–Cys508. The segment at 474–479 (HEGNAS) is HVR2. Residues 480–493 (DDQRPYCWHYALRP) are CD81-binding 1. Asn532 carries N-linked (GlcNAc...) (high mannose) asparagine; by host glycosylation. N-linked (GlcNAc...) asparagine; by host glycosylation is present at Asn540. Residues 544-551 (PPMGNWFG) form a CD81-binding 2 region. N-linked (GlcNAc...) (high mannose) asparagine; by host glycosylation occurs at Asn556. Cys564 and Cys569 are disulfide-bonded. A glycan (N-linked (GlcNAc...) (high mannose) asparagine; by host) is linked at Asn576. Disulfide bonds link Cys581-Cys585, Cys597-Cys620, and Cys607-Cys644. N-linked (GlcNAc...) (high mannose) asparagine; by host glycans are attached at residues Asn623 and Asn645. A disulfide bridge links Cys652 with Cys677. The interval 660-671 (AELSPLLLSTTQ) is PKR/eIF2-alpha phosphorylation homology domain (PePHD). A helical membrane pass occupies residues 726-746 (LADARICACLWMMLLISQVEA). Residues 747-757 (ALENLIVLNAA) lie on the Lumenal side of the membrane. The helical transmembrane segment at 758–778 (SLVGTHGIVPFFIFFCAAWYL) threads the bilayer. Over 779-781 (KGK) the chain is Cytoplasmic. The helical transmembrane segment at 782 to 803 (WAPGLAYSVYGMWPLLLLLLAL) threads the bilayer. Topologically, residues 804 to 813 (PQRAYALDQE) are lumenal. Residues 814–834 (LAASCGATVFICLAVLTLSPY) form a helical membrane-spanning segment. Topologically, residues 835–838 (YKQY) are cytoplasmic. A helical membrane pass occupies residues 839-859 (MARGIWWLQYMLTRAEALLQV). The Lumenal segment spans residues 860–881 (WVPPLNARGGRDGVVLLTCVLH). A helical membrane pass occupies residues 882–902 (PHLLFEITKIMLAILGPLWIL). A Peptidase C18 domain is found at 903 to 1026 (QASLLKVPYF…ALTDKGWRLL (124 aa)). Residues 903–1657 (QASLLKVPYF…CMSADLEVVT (755 aa)) lie on the Cytoplasmic side of the membrane. A protease NS2-3 region spans residues 904–1206 (ASLLKVPYFV…PVESLETTMR (303 aa)). A lipid anchor (S-palmitoyl cysteine; by host) is attached at Cys922. An interaction with host SCPS1 region spans residues 929-949 (AGGQYVQMALLKLGAFAGTYI). Active-site for protease NS2 activity; shared with dimeric partner residues include His952, Glu972, and Cys993. The region spanning 1027 to 1208 (APITAYAQQT…ESLETTMRSP (182 aa)) is the Peptidase S29 domain. Residues His1083 and Asp1107 each act as charge relay system; for serine protease NS3 activity in the active site. Zn(2+)-binding residues include Cys1123 and Cys1125. Ser1165 functions as the Charge relay system; for serine protease NS3 activity in the catalytic mechanism. Zn(2+) contacts are provided by Cys1171 and His1175. A Helicase ATP-binding domain is found at 1217–1369 (PTVPQSYQVA…SNIEEVALST (153 aa)). 1230–1237 (APTGSGKS) contributes to the ATP binding site. 2 residues coordinate Mg(2+): Ser1237 and Glu1317. A DECH box motif is present at residues 1316–1319 (DECH). The interval 1486–1497 (QRRGRTGRGKHG) is RNA-binding. The helical transmembrane segment at 1658 to 1678 (STWVLVGGVLAALAAYCLSTG) threads the bilayer. The segment at 1679–1690 (SVVIVGRIILSG) is NS3-binding. The Cytoplasmic portion of the chain corresponds to 1679 to 1805 (SVVIVGRIIL…AVTSPLTTQQ (127 aa)). A helical membrane pass occupies residues 1806-1824 (TLLFNILGGWVAAQLAAPA). Residues 1825 to 1828 (AATA) are Lumenal-facing. The chain crosses the membrane as a helical span at residues 1829 to 1849 (FVGAGITGAVIGSVGLGKVLV). Asp1850 is a topological domain (cytoplasmic). A helical membrane pass occupies residues 1851 to 1871 (ILAGYGAGVAGALVAFKIMSG). Topologically, residues 1872-1881 (EAPTAEDLVN) are lumenal. The helical transmembrane segment at 1882 to 1902 (LLPAILSPGALVVGVVCAAIL) threads the bilayer. At 1903–1972 (RRHVGPGEGA…WISSDCTAPC (70 aa)) the chain is on the cytoplasmic side. 2 S-palmitoyl cysteine; by host lipidation sites follow: Cys1968 and Cys1972. Residues 1973–2002 (AGSWLKDVWDWICEVLSDFKSWLKAKLMPQ) lie within the membrane without spanning it. At 2003–2990 (LPGIPFVSCQ…YHSVSHVRPR (988 aa)) the chain is on the cytoplasmic side. Zn(2+) is bound by residues Cys2011, Cys2029, Cys2031, and Cys2052. The tract at residues 2120 to 2208 (EFFTEVDGVR…ASSSASQLSA (89 aa)) is FKBP8-binding. A transcriptional activation region spans residues 2120-2332 (EFFTEVDGVR…PVPPPRRKRT (213 aa)). An interaction with non-structural protein 4A region spans residues 2135–2139 (PPCKP). The segment at 2189-2441 (RLNRGSPPSL…TPCAAEETKL (253 aa)) is interaction with host SKP2. Residue Ser2194 is modified to Phosphoserine; by host; in p56. Phosphoserine; by host; in p58 is present on residues Ser2197, Ser2201, Ser2204, Ser2207, and Ser2210. The tract at residues 2210 to 2249 (SLKATCTTHHDSPDADLITANLLWRQEMGGNITRVESENK) is ISDR. The interval 2210 to 2275 (SLKATCTTHH…REISVPAEIL (66 aa)) is interaction with EIF2AK2/PKR. Positions 2249 to 2306 (KIVILDSFDPLVAEEDDREISVPAEILLKSKKFPPAMPIWARPDYNPPLVEPWKRPDY) are NS4B-binding. Residues 2322–2325 (TPVP) carry the SH3-binding motif. Residues 2326–2334 (PPRRKRTVV) carry the Nuclear localization signal motif. Lys2350 is covalently cross-linked (Glycyl lysine isopeptide (Lys-Gly) (interchain with G-Cter in ubiquitin)). Residues 2352–2373 (FGSSTTSGVTSGEAAESSPAPS) are compositionally biased toward low complexity. The interval 2352-2409 (FGSSTTSGVTSGEAAESSPAPSCDGELDSEAESYSSMPPLEGEPGDPDLSDGSWSTVS) is disordered. Residues 2354 to 2377 (SSTTSGVTSGEAAESSPAPSCDGE) are V3. 2 positions are modified to phosphoserine; by host: Ser2449 and Ser2462. Positions 2634–2752 (PMGFSYDTRC…ICESAGVQED (119 aa)) constitute a RdRp catalytic domain. Residues Asp2640, Asp2738, and Asp2739 each coordinate Mg(2+). A helical membrane pass occupies residues 2991-3011 (WFFWCLLLLSVGVGIYLLPNR).

This sequence belongs to the hepacivirus polyprotein family. Homooligomer. Interacts with E1 (via C-terminus). Interacts with the non-structural protein 5A. Interacts (via N-terminus) with host STAT1 (via SH2 domain); this interaction results in decreased STAT1 phosphorylation and ubiquitin-mediated proteasome-dependent STAT1 degradation, leading to decreased IFN-stimulated gene transcription. Interacts with host STAT3; this interaction constitutively activates STAT3. Interacts with host LTBR receptor. Interacts with host TNFRSF1A receptor and possibly induces apoptosis. Interacts with host HNRPK. Interacts with host YWHAE. Interacts with host UBE3A/E6AP. Interacts with host DDX3X. Interacts with host APOA2. Interacts with host RXRA protein. Interacts with host SP110 isoform 3/Sp110b; this interaction sequesters the transcriptional corepressor SP110 away from the nucleus. Interacts with host CREB3 nuclear transcription protein; this interaction triggers cell transformation. Interacts with host ACY3. Interacts with host C1QR1. Interacts with host RBM24; this interaction, which enhances the interaction of the mature core protein with 5'-UTR, may inhibit viral translation and favor replication. Interacts with host EIF2AK2/PKR; this interaction induces the autophosphorylation of EIF2AK2. Part of the viral assembly initiation complex composed of NS2, E1, E2, NS3, NS4A, NS5A and the mature core protein. In terms of assembly, forms a heterodimer with envelope glycoprotein E2. Interacts with mature core protein. Interacts with protease NS2. The heterodimer E1/E2 interacts with host CLDN1; this interaction plays a role in viral entry into host cell. Interacts with host SPSB2 (via C-terminus). Part of the viral assembly initiation complex composed of NS2, E1, E2, NS3, NS4A, NS5A and the mature core protein. Interacts with host NEURL3; this interaction prevents E1 binding to glycoprotein E2. As to quaternary structure, forms a heterodimer with envelope glycoprotein E1. Interacts with host CD81 and SCARB1 receptors; these interactions play a role in viral entry into host cell. Interacts with host EIF2AK2/PKR; this interaction inhibits EIF2AK2 and probably allows the virus to evade the innate immune response. Interacts with host CD209/DC-SIGN and CLEC4M/DC-SIGNR. Interact with host SPCS1; this interaction is essential for viral particle assembly. Interacts with protease NS2. The heterodimer E1/E2 interacts with host CLDN1; this interaction plays a role in viral entry into host cell. Part of the viral assembly initiation complex composed of NS2, E1, E2, NS3, NS4A, NS5A and the mature core protein. Interacts with host SLC3A2/4F2hc; the interaction may facilitate viral entry into host cell. Interacts with human PLSCR1. Homohexamer. Homoheptamer. Interacts with protease NS2. In terms of assembly, homodimer. Interacts with host SPCS1; this interaction is essential for viral particle assembly. Interacts with envelope glycoprotein E1. Interacts with envelope glycoprotein E2. Interacts with viroporin p7. Interacts with serine protease/helicase NS3. Part of the replication complex composed of NS2, NS3, NS4A, NS4B, NS5A and the RNA-directed RNA polymerase embedded in an ER-derived membranous web. Part of the viral assembly initiation complex composed of NS2, E1, E2, NS3, NS4A, NS5A and the mature core protein. As to quaternary structure, interacts with protease NS2. Interacts with non-structural protein 4A; this interaction stabilizes the folding of NS3 serine protease. NS3-NS4A interaction is essential for NS3 activation and allows membrane anchorage of the latter. NS3/NS4A complex also prevents phosphorylation of host IRF3, thus preventing the establishment of dsRNA induced antiviral state. Interacts with host MAVS; this interaction leads to the cleavage and inhibition of host MAVS. Interacts with host TICAM1; this interaction leads to the cleavage and inhibition of host TICAM1. Interacts with host TANK-binding kinase/TBK1; this interaction results in the inhibition of the association between TBK1 and IRF3, which leads to the inhibition of IRF3 activation. Interacts with host RBM24. Part of the replication complex composed of NS2, NS3, NS4A, NS4B, NS5A and the RNA-directed RNA polymerase embedded in an ER-derived membranous web. Part of the viral assembly initiation complex composed of NS2, E1, E2, NS3, NS4A, NS5A and the mature core protein. Interacts with NS3 serine protease; this interaction stabilizes the folding of NS3 serine protease. NS3-NS4A interaction is essential for NS3 activation and allows membrane anchorage of the latter. Interacts with non-structural protein 5A (via N-terminus). Part of the replication complex composed of NS2, NS3, NS4A, NS4B, NS5A and the RNA-directed RNA polymerase embedded in an ER-derived membranous web. Part of the viral assembly initiation complex composed of NS2, E1, E2, NS3, NS4A, NS5A and the mature core protein. In terms of assembly, homomultimer. Interacts with non-structural protein NS5A. Interacts with host PLA2G4C; this interaction likely initiates the recruitment of replication complexes to lipid droplets. Interacts with host STING; this interaction disrupts the interaction between STING and TBK1 thereby suppressing the interferon signaling. Part of the replication complex composed of NS2, NS3, NS4A, NS4B, NS5A and the RNA-directed RNA polymerase embedded in an ER-derived membranous web. As to quaternary structure, monomer. Homodimer; dimerization is required for RNA-binding. Interacts with the mature core protein. Interacts (via N-terminus) with non-structural protein 4A. Interacts with non-structural protein 4B. Interacts (via region D2) with RNA-directed RNA polymerase. Part of the viral assembly initiation complex composed of NS2, E1, E2, NS3, NS4A, NS5A and the mature core protein. Part of the replication complex composed of NS2, NS3, NS4A, NS4B, NS5A and the RNA-directed RNA polymerase embedded in an ER-derived membranous web. Interacts with host GRB2. Interacts with host BIN1. Interacts with host PIK3R1. Interacts with host SRCAP. Interacts with host FKBP8. Interacts (via C-terminus) with host VAPB (via MSP domain). Interacts with host EIF2AK2/PKR; this interaction leads to disruption of EIF2AK2 dimerization by NS5A and probably allows the virus to evade the innate immune response. Interacts (via N-terminus) with host PACSIN2 (via N-terminus); this interaction attenuates protein kinase C alpha-mediated phosphorylation of PACSIN2 by disrupting the interaction between PACSIN2 and PRKCA. Interacts (via N-terminus) with host SRC kinase (via SH2 domain). Interacts with most Src-family kinases. Interacts with host IFI27 and SKP2; promotes the ubiquitin-mediated proteasomal degradation of NS5A. Interacts with host GPS2. Interacts with host TNFRSF21; this interaction allows the modulation by the virus of JNK, p38 MAPK, STAT3, and Akt signaling pathways in a DR6-dependent manner. Interacts (via N-terminus) with host CIDEB (via N-terminus); this interaction seems to regulate the association of HCV particles with APOE. Interacts with host CHKA/Choline Kinase-alpha; CHKA bridges host PI4KA and NS5A and potentiates NS5A-stimulated PI4KA activity, which then facilitates the targeting of the ternary complex to the ER for viral replication. Interacts with host SPSB2 (via C-terminus); this interaction targets NS5A for ubiquitination and degradation. Interacts with host RAB18; this interaction may promote the association of NS5A and other replicase components with lipid droplets. Interacts (via region D2) with host PPIA/CYPA; the interaction stimulates RNA-binding ability of NS5A and is dependent on the peptidyl-prolyl cis-trans isomerase activity of PPIA/CYPA. Interacts with host TRIM14; this interaction induces the degradation of NS5A. Homooligomer. Interacts with non-structural protein 5A. Interacts with host VAPB. Interacts with host PRK2/PKN2. Interacts with host HNRNPA1 and SEPT6; these interactions facilitate viral replication. Part of the replication complex composed of NS2, NS3, NS4A, NS4B, NS5A and the RNA-directed RNA polymerase. Zn(2+) serves as cofactor. The cofactor is Mg(2+). Specific enzymatic cleavages in vivo yield mature proteins. The structural proteins, core, E1, E2 and p7 are produced by proteolytic processing by host signal peptidases. The core protein precursor is synthesized as a 23 kDa, which is retained in the ER membrane through the hydrophobic signal peptide. Cleavage by the signal peptidase releases the 21 kDa mature core protein. The cleavage of the core protein precursor occurs between aminoacids 176 and 188 but the exact cleavage site is not known. Some degraded forms of the core protein appear as well during the course of infection. The other proteins (p7, NS2, NS3, NS4A, NS4B, NS5A and NS5B) are cleaved by the viral proteases. Autoprocessing between NS2 and NS3 is mediated by the NS2 cysteine protease catalytic domain and regulated by the NS3 N-terminal domain. In terms of processing, phosphorylated by host PKC and PKA. Post-translationally, ubiquitinated; mediated by UBE3A and leading to core protein subsequent proteasomal degradation. Highly N-glycosylated. In terms of processing, palmitoylation is required for NS2/3 autoprocessing and E2 recruitment to membranes. Post-translationally, palmitoylated. This modification may play a role in its polymerization or in protein-protein interactions. Phosphorylated on serines in a basal form termed p56. p58 is a hyperphosphorylated form of p56. p56 and p58 coexist in the cell in roughly equivalent amounts. Hyperphosphorylation is dependent on the presence of NS4A. Host CSNK1A1/CKI-alpha or RPS6KB1 kinases may be responsible for NS5A phosphorylation. In terms of processing, tyrosine phosphorylation is essential for the interaction with host SRC. Post-translationally, the N-terminus is phosphorylated by host PRK2/PKN2.

It is found in the host endoplasmic reticulum membrane. The protein localises to the host mitochondrion membrane. The protein resides in the virion. It localises to the host cytoplasm. Its subcellular location is the host nucleus. It is found in the host lipid droplet. The protein localises to the virion membrane. The protein resides in the host mitochondrion. It localises to the host cell membrane. Its subcellular location is the host perinuclear region. The enzyme catalyses Hydrolysis of four peptide bonds in the viral precursor polyprotein, commonly with Asp or Glu in the P6 position, Cys or Thr in P1 and Ser or Ala in P1'.. It catalyses the reaction a ribonucleoside 5'-triphosphate + H2O = a ribonucleoside 5'-diphosphate + phosphate + H(+). It carries out the reaction ATP + H2O = ADP + phosphate + H(+). The catalysed reaction is RNA(n) + a ribonucleoside 5'-triphosphate = RNA(n+1) + diphosphate. Its activity is regulated as follows. Inhibited by the antiviral drug hexamethylene amiloride. Inhibition by amantadine appears to be genotype-dependent. Also inhibited by long-alkyl-chain iminosugar derivatives. Activity is up-regulated by PRK2/PKN2-mediated phosphorylation. In terms of biological role, packages viral RNA to form a viral nucleocapsid, and promotes virion budding. Participates in the viral particle production as a result of its interaction with the non-structural protein 5A. Binds RNA and may function as a RNA chaperone to induce the RNA structural rearrangements taking place during virus replication. Modulates viral translation initiation by interacting with viral IRES and 40S ribosomal subunit. Affects various cell signaling pathways, host immunity and lipid metabolism. Prevents the establishment of cellular antiviral state by blocking the interferon-alpha/beta (IFN-alpha/beta) and IFN-gamma signaling pathways and by blocking the formation of phosphorylated STAT1 and promoting ubiquitin-mediated proteasome-dependent degradation of STAT1. Activates STAT3 leading to cellular transformation. Regulates the activity of cellular genes, including c-myc and c-fos. May repress the promoter of p53, and sequester CREB3 and SP110 isoform 3/Sp110b in the cytoplasm. Represses cell cycle negative regulating factor CDKN1A, thereby interrupting an important check point of normal cell cycle regulation. Targets transcription factors involved in the regulation of inflammatory responses and in the immune response: suppresses TNF-induced NF-kappa-B activation, and activates AP-1. Binds to dendritic cells (DCs) via C1QR1, resulting in down-regulation of T-lymphocytes proliferation. Alters lipid metabolism by interacting with hepatocellular proteins involved in lipid accumulation and storage. Induces up-regulation of FAS promoter activity, and thereby contributes to the increased triglyceride accumulation in hepatocytes (steatosis). Functionally, forms a heterodimer with envelope glycoprotein E2, which mediates virus attachment to the host cell, virion internalization through clathrin-dependent endocytosis and fusion with host membrane. Fusion with the host cell is most likely mediated by both E1 and E2, through conformational rearrangements of the heterodimer required for fusion rather than a classical class II fusion mechanism. E1/E2 heterodimer binds host apolipoproteins such as APOB and ApoE thereby forming a lipo-viro-particle (LVP). APOE associated to the LVP allows the initial virus attachment to cell surface receptors such as the heparan sulfate proteoglycans (HSPGs), syndecan-1 (SDC1), syndecan-1 (SDC2), the low-density lipoprotein receptor (LDLR) and scavenger receptor class B type I (SCARB1). The cholesterol transfer activity of SCARB1 allows E2 exposure and binding of E2 to SCARB1 and the tetraspanin CD81. E1/E2 heterodimer binding on CD81 activates the epithelial growth factor receptor (EGFR) signaling pathway. Diffusion of the complex E1-E2-EGFR-SCARB1-CD81 to the cell lateral membrane allows further interaction with Claudin 1 (CLDN1) and occludin (OCLN) to finally trigger HCV entry. Its function is as follows. Forms a heterodimer with envelope glycoprotein E1, which mediates virus attachment to the host cell, virion internalization through clathrin-dependent endocytosis and fusion with host membrane. Fusion with the host cell is most likely mediated by both E1 and E2, through conformational rearrangements of the heterodimer required for fusion rather than a classical class II fusion mechanism. The interaction between envelope glycoprotein E2 and host apolipoprotein E/APOE allows the proper assembly, maturation and infectivity of the viral particles. This interaction is probably promoted via the up-regulation of cellular autophagy by the virus. E1/E2 heterodimer binds host apolipoproteins such as APOB and APOE thereby forming a lipo-viro-particle (LVP). APOE associated to the LVP allows the initial virus attachment to cell surface receptors such as the heparan sulfate proteoglycans (HSPGs), syndecan-1 (SDC1), syndecan-1 (SDC2), the low-density lipoprotein receptor (LDLR) and scavenger receptor class B type I (SCARB1). The cholesterol transfer activity of SCARB1 allows E2 exposure and binding of E2 to SCARB1 and the tetraspanin CD81. E1/E2 heterodimer binding on CD81 activates the epithelial growth factor receptor (EGFR) signaling pathway. Diffusion of the complex E1-E2-EGFR-SCARB1-CD81 to the cell lateral membrane allows further interaction with Claudin 1 (CLDN1) and occludin (OCLN) to finally trigger HCV entry. Inhibits host EIF2AK2/PKR activation, preventing the establishment of an antiviral state. Viral ligand for CD209/DC-SIGN and CLEC4M/DC-SIGNR, which are respectively found on dendritic cells (DCs), and on liver sinusoidal endothelial cells and macrophage-like cells of lymph node sinuses. These interactions allow the capture of circulating HCV particles by these cells and subsequent facilitated transmission to permissive cells such as hepatocytes and lymphocyte subpopulations. The interaction between E2 and host amino acid transporter complex formed by SLC3A2 and SLC7A5/LAT1 may facilitate viral entry into host cell. Ion channel protein that acts as a viroporin and plays an essential role in the assembly, envelopment and secretion of viral particles. Regulates the host cell secretory pathway, which induces the intracellular retention of viral glycoproteins and favors assembly of viral particles. Creates a pore in acidic organelles and releases Ca(2+) and H(+) in the cytoplasm of infected cells, leading to a productive viral infection. High levels of cytoplasmic Ca(2+) may trigger membrane trafficking and transport of viral ER-associated proteins to viroplasms, sites of viral genome replication. This ionic imbalance induces the assembly of the inflammasome complex, which triggers the maturation of pro-IL-1beta into IL-1beta through the action of caspase-1. Targets also host mitochondria and induces mitochondrial depolarization. In addition of its role as a viroporin, acts as a lipid raft adhesion factor. In terms of biological role, cysteine protease required for the proteolytic auto-cleavage between the non-structural proteins NS2 and NS3. The N-terminus of NS3 is required for the function of NS2 protease (active region NS2-3). Promotes the initiation of viral particle assembly by mediating the interaction between structural and non-structural proteins. Functionally, displays three enzymatic activities: serine protease with a chymotrypsin-like fold, NTPase and RNA helicase. NS3 serine protease, in association with NS4A, is responsible for the cleavages of NS3-NS4A, NS4A-NS4B, NS4B-NS5A and NS5A-NS5B. The NS3/NS4A complex prevents phosphorylation of host IRF3, thus preventing the establishment of dsRNA induced antiviral state. The NS3/NS4A complex induces host amino acid transporter component SLC3A2, thus contributing to HCV propagation. NS3 RNA helicase binds to RNA and unwinds both dsDNA and dsRNA in the 3' to 5' direction, and likely resolves RNA complicated stable secondary structures in the template strand. Binds a single ATP and catalyzes the unzipping of a single base pair of dsRNA. Inhibits host antiviral proteins TBK1 and IRF3 thereby preventing the establishment of an antiviral state. Cleaves host MAVS/CARDIF thereby preventing the establishment of an antiviral state. Cleaves host TICAM1/TRIF, thereby disrupting TLR3 signaling and preventing the establishment of an antiviral state. Its function is as follows. Induces a specific membrane alteration that serves as a scaffold for the virus replication complex. This membrane alteration gives rise to the so-called ER-derived membranous web that contains the replication complex. NS4B self-interaction contributes to its function in membranous web formation. Promotes host TRIF protein degradation in a CASP8-dependent manner thereby inhibiting host TLR3-mediated interferon signaling. Disrupts the interaction between STING and TBK1 contributing to the inhibition of interferon signaling. Phosphorylated protein that is indispensable for viral replication and assembly. Both hypo- and hyperphosphorylated states are required for the viral life cycle. The hyperphosphorylated form of NS5A is an inhibitor of viral replication. Involved in RNA-binding and especially in binding to the viral genome. Zinc is essential for RNA-binding. Participates in the viral particle production as a result of its interaction with the mature viral core protein. Its interaction with host VAPB may target the viral replication complex to vesicles. Down-regulates viral IRES translation initiation. Mediates interferon resistance, presumably by interacting with and inhibiting host EIF2AK2/PKR. Prevents BIN1-induced apoptosis. Acts as a transcriptional activator of some host genes important for viral replication when localized in the nucleus. Via the interaction with host PACSIN2, modulates lipid droplet formation in order to promote virion assembly. Modulates TNFRSF21/DR6 signaling pathway for viral propagation. In terms of biological role, RNA-dependent RNA polymerase that performs primer-template recognition and RNA synthesis during viral replication. Initiates RNA transcription/replication at a flavin adenine dinucleotide (FAD), resulting in a 5'- FAD cap on viral RNAs. In this way, recognition of viral 5' RNA by host pattern recognition receptors can be bypassed, thereby evading activation of antiviral pathways. The chain is Genome polyprotein from Homo sapiens (Human).